The chain runs to 1159 residues: Reverse gyrase 2 (1159 aa).

The RG N-terminal-type zinc-finger motif lies at M1 to V40. Zn(2+) contacts are provided by C10, C13, C28, and C31. Residues Q82 and A99–T106 contribute to the ATP site. Residues A86 to V275 form the Helicase ATP-binding domain. A DEAD box motif is present at residues D196–D199. The segment at D583–K1159 is topoisomerase I. Residues T587–V743 form the Toprim domain. Positions 593 and 712 each coordinate Mg(2+). The 394-residue stretch at D759–K1152 folds into the Topo IA-type catalytic domain. Catalysis depends on Y902, which acts as the O-(5'-phospho-DNA)-tyrosine intermediate.

It in the N-terminal section; belongs to the DEAD box helicase family. DDVD subfamily. In the C-terminal section; belongs to the type IA topoisomerase family. In terms of assembly, monomer. Zn(2+) serves as cofactor. The cofactor is Mg(2+).

It is found in the cytoplasm. It catalyses the reaction ATP + H2O = ADP + phosphate + H(+). Modifies the topological state of DNA by introducing positive supercoils in an ATP-dependent process, increasing the linking number in steps of +1. Binds to single-stranded DNA, transiently cleaves and then rejoins the ends, introducing a positive supercoil in the process. The scissile phosphodiester is attacked by the catalytic tyrosine of the enzyme, resulting in the formation of a DNA-(5'-phosphotyrosyl)-enzyme intermediate. Probably involved in rewinding DNA strands in regions of the chromosome that have opened up to allow replication, transcription, DNA repair and/or for DNA protection. The sequence is that of Reverse gyrase 2 from Aquifex aeolicus (strain VF5).